The sequence spans 567 residues: Potassium-transporting ATPase potassium-binding subunit (567 aa).

12 helical membrane-spanning segments follow: residues 5 to 25 (GWLQ…PLGG), 64 to 84 (TTYS…LYFL), 136 to 156 (GFTV…IALI), 179 to 199 (LYVL…LGVP), 254 to 274 (ISNL…TNVF), 285 to 305 (WAIL…TYWA), 328 to 350 (VRFG…CGAV), 375 to 395 (IVGG…IAIF), 421 to 441 (MLAV…SVVL), 459 to 481 (ILYA…SANT), 486 to 506 (ITLG…ALAI), and 529 to 549 (LFVG…FFPA).

Belongs to the KdpA family. The system is composed of three essential subunits: KdpA, KdpB and KdpC.

It localises to the cell inner membrane. Part of the high-affinity ATP-driven potassium transport (or Kdp) system, which catalyzes the hydrolysis of ATP coupled with the electrogenic transport of potassium into the cytoplasm. This subunit binds the periplasmic potassium ions and delivers the ions to the membrane domain of KdpB through an intramembrane tunnel. This chain is Potassium-transporting ATPase potassium-binding subunit, found in Rhizobium rhizogenes (strain K84 / ATCC BAA-868) (Agrobacterium radiobacter).